Reading from the N-terminus, the 240-residue chain is Cysteine-rich venom protein (240 aa).

The N-terminal stretch at 1–19 (MIAFIVLPILAAVLQQSSG) is a signal peptide. Positions 39-166 (DLHNSLRRSV…EYSYFYVCQY (128 aa)) constitute an SCP domain. Intrachain disulfides connect cysteine 75-cysteine 153, cysteine 92-cysteine 167, cysteine 148-cysteine 164, cysteine 186-cysteine 193, cysteine 189-cysteine 198, cysteine 202-cysteine 235, cysteine 211-cysteine 229, and cysteine 220-cysteine 233. Residues 202 to 235 (CRQENKFTNCDSLVRQSSCQDNYMKTNCPASCFC) form the ShKT domain.

The protein belongs to the CRISP family. As to expression, expressed by the venom gland.

Its subcellular location is the secreted. Blocks contraction of smooth muscle elicited by high potassium-induced depolarization, but does not block caffeine-stimulated contraction. May target voltage-gated calcium channels on smooth muscle. The protein is Cysteine-rich venom protein of Protobothrops jerdonii (Jerdon's pitviper).